We begin with the raw amino-acid sequence, 332 residues long: PRKC apoptosis WT1 regulator protein (332 aa).

Polar residues-rich tracts occupy residues 1 to 14 (MATG…STTD) and 52 to 62 (AQTTAAGTSEL). The disordered stretch occupies residues 1–253 (MATGGYRSSG…HNRDTSAPAN (253 aa)). Residues 61 to 65 (ELNHG) carry the B30.2/SPRY domain-binding motif motif. Positions 65 to 79 (GPAGAAAPAAPGPGA) are enriched in low complexity. Residues 137–153 (RKGKGQIEKRKLREKRR) carry the Nuclear localization signal motif. A selective for apoptosis induction in cancer cells (SAC) region spans residues 137–195 (RKGKGQIEKRKLREKRRSTGVVNIPAAECLDEYEDDEAGQKERKREDAITQQNTIQNEA). Phosphothreonine; by PKA is present on Thr-155. Residues 174 to 184 (AGQKERKREDA) are compositionally biased toward basic and acidic residues. A coiled-coil region spans residues 176-198 (QKERKREDAITQQNTIQNEAASL). Residues 185–195 (ITQQNTIQNEA) are compositionally biased toward polar residues. Phosphoserine is present on Ser-223. Basic and acidic residues predominate over residues 234–247 (PRTDRSGFSRHNRD). Positions 292-332 (IGKLKEEIDLLNRDLDDMEDENEQLKQENKTLLKVVGQLTR) are leucine-zipper.

In terms of assembly, homooligomer. Interacts (via the C-terminal region) with WT1. Interacts with THAP1. Interacts with AATF. Interacts with BACE1. Interacts with SPSB1 (via B30.2/SPRY domain); this interaction is direct and occurs in association with the Elongin BC complex. Interacts with SPSB2 (via B30.2/SPRY domain); this interaction occurs in association with the Elongin BC complex. Interacts with SPSB4 (via B30.2/SPRY domain); this interaction occurs in association with the Elongin BC complex. Component of a ternary complex composed of SQSTM1 and PRKCZ. Interacts with actin. Preferentially phosphorylated at the Thr-155 by PKC in cancer cells.

The protein resides in the cytoplasm. The protein localises to the nucleus. In terms of biological role, pro-apoptotic protein capable of selectively inducing apoptosis in cancer cells, sensitizing the cells to diverse apoptotic stimuli and causing regression of tumors in animal models. Induces apoptosis in certain cancer cells by activation of the Fas prodeath pathway and coparallel inhibition of NF-kappa-B transcriptional activity. Inhibits the transcriptional activation and augments the transcriptional repression mediated by WT1. Down-regulates the anti-apoptotic protein BCL2 via its interaction with WT1. Also seems to be a transcriptional repressor by itself. May be directly involved in regulating the amyloid precursor protein (APP) cleavage activity of BACE1. The sequence is that of PRKC apoptosis WT1 regulator protein (Pawr) from Rattus norvegicus (Rat).